The chain runs to 245 residues: Complement C1q subcomponent subunit A (245 aa).

Positions 1 to 22 (MEGPRGWLVLCVLAISLASMVT) are cleaved as a signal peptide. Basic and acidic residues predominate over residues 27 to 38 (RAPDGKKGEAGR). Positions 27–114 (RAPDGKKGEA…SPGNIKDQPR (88 aa)) are disordered. A Collagen-like domain is found at 31 to 109 (GKKGEAGRPG…KGTKGSPGNI (79 aa)). Lys-33 is modified (5-hydroxylysine). Lys-33 is a glycosylation site (O-linked (Gal...) hydroxylysine). A 4-hydroxyproline mark is found at Pro-39 and Pro-45. 5-hydroxylysine is present on Lys-48. O-linked (Gal...) hydroxylysine glycosylation is present at Lys-48. Residues Pro-54 and Pro-57 each carry the 4-hydroxyproline modification. 5-hydroxylysine is present on Lys-67. Lys-67 carries O-linked (Gal...) hydroxylysine glycosylation. A 4-hydroxyproline mark is found at Pro-73, Pro-79, and Pro-85. Position 100 is a 5-hydroxylysine (Lys-100). Lys-100 is a glycosylation site (O-linked (Gal...) hydroxylysine). The region spanning 110-245 (KDQPRPAFSA…FSGFLIFPSA (136 aa)) is the C1q domain. Asn-146 carries N-linked (GlcNAc...) asparagine glycosylation. Cys-172 and Cys-190 are joined by a disulfide. A Ca(2+)-binding site is contributed by Gln-199.

As to quaternary structure, core component of the complement C1 complex, a calcium-dependent complex composed of 1 molecule of the C1Q subcomplex, 2 molecules of C1R and 2 molecules of C1S. The C1Q subcomplex is composed 18 subunits: 3 chains of C1QA, C1QB, and C1QC trimerize to form 6 collagen-like triple helices connected to six globular ligand-recognition modules (C1q domain). Interacts with CR1 (via Sushi 24 and Sushi 25 domains). Interacts (via C-terminus) with CD33; this interaction activates CD33 inhibitory motifs. In terms of assembly, (Microbial infection) Interacts with Staphylococcus aureus protein Cna; this interaction results in the inhibition of the classical complement pathway. In terms of processing, O-linked glycans are assumed to be the Glc-Gal disaccharides typically found as secondary modifications of hydroxylated lysines in collagen-like domains.

The protein localises to the secreted. The protein resides in the cell surface. The C1Q subcomplex is inhibited by sulfated molecules, such as triterpenoid sulfates, heparan sulfate, or chondroitin sulfates. Its function is as follows. Core component of the complement C1 complex, a multiprotein complex that initiates the classical pathway of the complement system, a cascade of proteins that leads to phagocytosis and breakdown of pathogens and signaling that strengthens the adaptive immune system. The classical complement pathway is initiated by the C1Q subcomplex of the C1 complex, which specifically binds IgG or IgM immunoglobulins complexed with antigens, forming antigen-antibody complexes on the surface of pathogens: C1QA, together with C1QB and C1QC, specifically recognizes and binds the Fc regions of IgG or IgM via its C1q domain. Immunoglobulin-binding activates the proenzyme C1R, which cleaves C1S, initiating the proteolytic cascade of the complement system. The C1Q subcomplex is activated by a hexamer of IgG complexed with antigens, while it is activated by a pentameric IgM. The C1Q subcomplex also recognizes and binds phosphatidylserine exposed on the surface of cells undergoing programmed cell death, possibly promoting activation of the complement system. The sequence is that of Complement C1q subcomponent subunit A from Homo sapiens (Human).